We begin with the raw amino-acid sequence, 2969 residues long: Histone-lysine N-methyltransferase ASH1L (2969 aa).

Disordered regions lie at residues 1 to 70 (MDPR…TDAQ) and 118 to 143 (HPRKALKSGKMTDEKNEHCPSKRDPS). A compositionally biased stretch (polar residues) spans 21–31 (KSPSAISTGTL). Ser-22 carries the phosphoserine modification. Composition is skewed to basic and acidic residues over residues 33 to 65 (SKREVELEKNTKEEEDLRKRNRERNIEAGKDDG) and 127 to 143 (KMTDEKNEHCPSKRDPS). Lys-34 participates in a covalent cross-link: Glycyl lysine isopeptide (Lys-Gly) (interchain with G-Cter in SUMO2). Lys-375 is modified (N6-acetyllysine). Residue Lys-425 forms a Glycyl lysine isopeptide (Lys-Gly) (interchain with G-Cter in SUMO2) linkage. Residues 501 to 511 (IQQDSFSSSEK) show a composition bias toward polar residues. 7 disordered regions span residues 501–525 (IQQDSFSSSEKGSYETSKHEKQPPV), 537–583 (ASDV…PNPL), 824–845 (YKPKRGRPKSKEMPQLEGPPKR), 878–966 (KQGL…EMEP), 1100–1128 (SEILPSPICSQSSGTSGGQSPVSSDAGFV), 1151–1231 (MKKA…EHVS), and 1243–1281 (SLKEKHKHKCKRRNHDYLSYDKMKRQKRKRKKKYPQLRN). Residues 512-522 (GSYETSKHEKQ) are compositionally biased toward basic and acidic residues. A compositionally biased stretch (polar residues) spans 554-579 (NLPSPSPTVSVNPLTRSPPETSSQLA). A compositionally biased stretch (basic residues) spans 887–897 (PKKRGRPKRQM). The segment at residues 887–899 (PKKRGRPKRQMRS) is a DNA-binding region (a.T hook 1). The segment covering 920–932 (SKLESESDNHRSS) has biased composition (basic and acidic residues). The segment covering 936–949 (FESEDQLQDPDDLD) has biased composition (acidic residues). Low complexity-rich tracts occupy residues 1100–1123 (SEILPSPICSQSSGTSGGQSPVSS) and 1162–1175 (SPPTLLPNSPSHLS). Phosphoserine is present on residues Ser-1162 and Ser-1170. Over residues 1186-1211 (SPISESHSDETIPSDSGIGTDNNSTS) the composition is skewed to polar residues. Gln-1220 bears the N5-methylglutamine mark. Basic residues-rich tracts occupy residues 1246-1256 (EKHKHKCKRRN) and 1266-1277 (KRQKRKRKKKYP). A DNA-binding region (a.T hook 2) is located at residues 1347–1359 (KKKRGRPPKMREA). 3 disordered regions span residues 1489 to 1508 (HREHRSSEQPQVSMDTGSSR), 1580 to 1711 (SESS…ASGD), and 1741 to 1761 (ASAPPSSSPGRSHSKDRTLGK). Polar residues-rich tracts occupy residues 1496–1508 (EQPQVSMDTGSSR), 1580–1598 (SESSPSLSLGGFTPNSEPA), 1605–1622 (NLFTSAIGSCRVSNPNSS), and 1650–1680 (LPSNERAVQTLAGSQPTSDKPSQRPSESTNC). The segment covering 1741 to 1751 (ASAPPSSSPGR) has biased composition (low complexity). The a.T hook 3 DNA-binding region spans 1847-1859 (KRRPGRPRKCPLQ). Residues 1911-1991 (KKGLKRKGWL…PRPPKKKYQK (81 aa)) are disordered. A catalytic domain region spans residues 2069-2288 (PDVPLYKKIR…KCRGIIGGKS (220 aa)). In terms of domain architecture, AWS spans 2091–2142 (YEATTCNCKKPDDDTRKGCVDDCLNRMIFAECSPNTCPCGEQCCNQRIQRHE). The region spanning 2145 to 2261 (QCLERFRAEE…AGTELTYDYN (117 aa)) is the SET domain. Positions 2269–2285 (KQQLCKCGFEKCRGIIG) constitute a Post-SET domain. The disordered stretch occupies residues 2288 to 2346 (SQRVNGLTSSKNSQPMATHKKSGRSKEKRKSKHKLKKRRGHLSEEPSENINTPTRLTPQ). Positions 2289 to 2303 (QRVNGLTSSKNSQPM) are enriched in polar residues. Residues 2305–2327 (THKKSGRSKEKRKSKHKLKKRRG) are compositionally biased toward basic residues. Lys-2317, Lys-2319, and Lys-2323 each carry N6-acetyllysine. Residues 2335 to 2346 (ENINTPTRLTPQ) show a composition bias toward polar residues. The region spanning 2444–2550 (RLAQIFKEIC…KAYYNARHEA (107 aa)) is the Bromo domain. The segment at 2585 to 2631 (VIRCICGLYKDEGLMIQCDKCMVWQHCDCMGVNSDVEHYLCEQCDPR) adopts a PHD-type zinc-finger fold. The region spanning 2661–2798 (LLLRQGDCVY…KSAHLFYKIH (138 aa)) is the BAH domain. Disordered stretches follow at residues 2825–2856 (SPHYVPDNYKRNGGRSSWKSERSKPPLKDLGQ) and 2876–2919 (NEIP…RRHN). Residues 2842-2855 (WKSERSKPPLKDLG) are compositionally biased toward basic and acidic residues.

The protein belongs to the class V-like SAM-binding methyltransferase superfamily. Histone-lysine methyltransferase family. SET2 subfamily. Post-translationally, methylated at Gln-1220 by N6AMT1. In terms of tissue distribution, widely expressed, with highest level in brain, heart and kidney.

Its subcellular location is the nucleus. The protein resides in the cell junction. It localises to the tight junction. It is found in the chromosome. It carries out the reaction L-lysyl(36)-[histone H3] + 3 S-adenosyl-L-methionine = N(6),N(6),N(6)-trimethyl-L-lysyl(36)-[histone H3] + 3 S-adenosyl-L-homocysteine + 3 H(+). The catalysed reaction is L-lysyl(9)-[histone H3] + S-adenosyl-L-methionine = N(6)-methyl-L-lysyl(9)-[histone H3] + S-adenosyl-L-homocysteine + H(+). Functionally, histone methyltransferase specifically trimethylating 'Lys-36' of histone H3 forming H3K36me3. Also monomethylates 'Lys-9' of histone H3 (H3K9me1) in vitro. The physiological significance of the H3K9me1 activity is unclear. The sequence is that of Histone-lysine N-methyltransferase ASH1L (ASH1L) from Homo sapiens (Human).